The primary structure comprises 879 residues: DNA double-strand break repair Rad50 ATPase (879 aa).

Residues 32-38 (NGAGKSS) and Q139 contribute to the ATP site. Coiled-coil stretches lie at residues 184 to 304 (IELQ…NKIK) and 342 to 436 (EIKG…NQVK). The Zinc-hook domain occupies 394–492 (LQKLNEDLNN…LISELNQIIN (99 aa)). C440 and C443 together coordinate Zn(2+). A coiled-coil region spans residues 502 to 722 (IRNLADYNNL…LITAYDKLKK (221 aa)). Residue 786-791 (LLSGGE) coordinates ATP.

Belongs to the SMC family. RAD50 subfamily. As to quaternary structure, homodimer. Forms a heterotetramer composed of two Mre11 subunits and two Rad50 subunits. The cofactor is Zn(2+).

In terms of biological role, part of the Rad50/Mre11 complex, which is involved in the early steps of DNA double-strand break (DSB) repair. The complex may facilitate opening of the processed DNA ends to aid in the recruitment of HerA and NurA. Rad50 controls the balance between DNA end bridging and DNA resection via ATP-dependent structural rearrangements of the Rad50/Mre11 complex. The chain is DNA double-strand break repair Rad50 ATPase from Sulfurisphaera tokodaii (strain DSM 16993 / JCM 10545 / NBRC 100140 / 7) (Sulfolobus tokodaii).